Here is a 329-residue protein sequence, read N- to C-terminus: Acetyl-coenzyme A carboxylase carboxyl transferase subunit alpha (329 aa).

The CoA carboxyltransferase C-terminal domain occupies 40–294 (QLETLAARRR…REAIERHLDE (255 aa)).

The protein belongs to the AccA family. As to quaternary structure, acetyl-CoA carboxylase is a heterohexamer composed of biotin carboxyl carrier protein (AccB), biotin carboxylase (AccC) and two subunits each of ACCase subunit alpha (AccA) and ACCase subunit beta (AccD).

The protein localises to the cytoplasm. The enzyme catalyses N(6)-carboxybiotinyl-L-lysyl-[protein] + acetyl-CoA = N(6)-biotinyl-L-lysyl-[protein] + malonyl-CoA. It functions in the pathway lipid metabolism; malonyl-CoA biosynthesis; malonyl-CoA from acetyl-CoA: step 1/1. Functionally, component of the acetyl coenzyme A carboxylase (ACC) complex. First, biotin carboxylase catalyzes the carboxylation of biotin on its carrier protein (BCCP) and then the CO(2) group is transferred by the carboxyltransferase to acetyl-CoA to form malonyl-CoA. The sequence is that of Acetyl-coenzyme A carboxylase carboxyl transferase subunit alpha from Prochlorococcus marinus (strain MIT 9313).